The sequence spans 374 residues: Chaperone protein DnaJ (374 aa).

The J domain maps to 5–70; it reads DYYEVLGVSK…QKRAAYDQYG (66 aa). The CR-type zinc finger occupies 132 to 210; sequence GTTVKIRVPT…CHGHGRVEET (79 aa). Zn(2+)-binding residues include cysteine 145, cysteine 148, cysteine 162, cysteine 165, cysteine 184, cysteine 187, cysteine 198, and cysteine 201. CXXCXGXG motif repeat units lie at residues 145 to 152, 162 to 169, 184 to 191, and 198 to 205; these read CKPCGGSG, CTTCGGHG, CPNCRGQG, and CKECHGHG.

This sequence belongs to the DnaJ family. Homodimer. Zn(2+) is required as a cofactor.

It is found in the cytoplasm. Its function is as follows. Participates actively in the response to hyperosmotic and heat shock by preventing the aggregation of stress-denatured proteins and by disaggregating proteins, also in an autonomous, DnaK-independent fashion. Unfolded proteins bind initially to DnaJ; upon interaction with the DnaJ-bound protein, DnaK hydrolyzes its bound ATP, resulting in the formation of a stable complex. GrpE releases ADP from DnaK; ATP binding to DnaK triggers the release of the substrate protein, thus completing the reaction cycle. Several rounds of ATP-dependent interactions between DnaJ, DnaK and GrpE are required for fully efficient folding. Also involved, together with DnaK and GrpE, in the DNA replication of plasmids through activation of initiation proteins. The chain is Chaperone protein DnaJ from Saccharophagus degradans (strain 2-40 / ATCC 43961 / DSM 17024).